An 82-amino-acid chain; its full sequence is Small ribosomal subunit protein bS16 (82 aa).

Belongs to the bacterial ribosomal protein bS16 family.

In Aliivibrio fischeri (strain ATCC 700601 / ES114) (Vibrio fischeri), this protein is Small ribosomal subunit protein bS16.